We begin with the raw amino-acid sequence, 461 residues long: Homocitrate synthase (461 aa).

Positions 4–259 constitute a Pyruvate carboxyltransferase domain; the sequence is VGILDSTLRE…IEVVKLDKLQ (256 aa). 2-oxoglutarate is bound at residue Arg-12. Glu-13 provides a ligand contact to Mg(2+). 2-oxoglutarate-binding residues include His-76, Arg-136, and Thr-170. Mg(2+) contacts are provided by His-198 and His-200. His-292 (proton acceptor) is an active-site residue.

This sequence belongs to the alpha-IPM synthase/homocitrate synthase family. Homocitrate synthase LYS20/LYS21 subfamily. Requires Mg(2+) as cofactor. The cofactor is Mn(2+).

It catalyses the reaction acetyl-CoA + 2-oxoglutarate + H2O = (2R)-homocitrate + CoA + H(+). Its pathway is amino-acid biosynthesis; L-lysine biosynthesis via AAA pathway; L-alpha-aminoadipate from 2-oxoglutarate: step 1/5. In terms of biological role, catalyzes the aldol-type condensation of 2-oxoglutarate with acetyl-CoA to yield homocitrate. Carries out the first step of the alpha-aminoadipate (AAA) lysine biosynthesis pathway. In Saccharolobus islandicus (strain L.S.2.15 / Lassen #1) (Sulfolobus islandicus), this protein is Homocitrate synthase.